We begin with the raw amino-acid sequence, 272 residues long: MWPKILLRGGRVAAGLCPALGPRLAARFPPQRTPENRLAPQRNLHATAARALPLIPIVVEQTGRGERAYDIYSRLLRERIVCVMGPIDDSVASLVIAQLLFLQSESNKKPIHMYINSPGGVVTSGLAIYDTMQYILNPICTWCVGQAASMGSLLLAAGTPGMRHSLPNSRIMIHQPSGGARGQATDIAIQAEEIMKLKKQLYSIYAKHTKQSLQVIESAMERDRYMSPMEAQEFGILDKVLVHPPQDGEDEPELVQKEPGEPTAVEPAPASA.

A mitochondrion-targeting transit peptide spans 1-52 (MWPKILLRGGRVAAGLCPALGPRLAARFPPQRTPENRLAPQRNLHATAARAL). Ser149 acts as the Nucleophile in catalysis. Residue His174 is part of the active site. Residue Lys196 is modified to N6-succinyllysine. Lys207 carries the N6-acetyllysine modification. The tract at residues 240–272 (VLVHPPQDGEDEPELVQKEPGEPTAVEPAPASA) is disordered.

The protein belongs to the peptidase S14 family. Fourteen CLPP subunits assemble into 2 heptameric rings which stack back to back to give a disk-like structure with a central cavity. Component of the ClpXP complex formed by the assembly of two CLPP heptameric rings with two CLPX hexameric rings, giving rise to a symmetrical structure with two central CLPP rings flanked by a CLPX ring at either end of the complex.

It is found in the mitochondrion matrix. It carries out the reaction Hydrolysis of proteins to small peptides in the presence of ATP and magnesium. alpha-casein is the usual test substrate. In the absence of ATP, only oligopeptides shorter than five residues are hydrolyzed (such as succinyl-Leu-Tyr-|-NHMec, and Leu-Tyr-Leu-|-Tyr-Trp, in which cleavage of the -Tyr-|-Leu- and -Tyr-|-Trp bonds also occurs).. Protease component of the ClpXP complex that cleaves peptides and various proteins in an ATP-dependent process. Has low peptidase activity in the absence of CLPX. The ClpXP complex can degrade CSN1S1, CSN2 and CSN3, as well as synthetic peptides (in vitro) and may be responsible for a fairly general and central housekeeping function rather than for the degradation of specific substrates. Cleaves PINK1 in the mitochondrion. This Bos taurus (Bovine) protein is ATP-dependent Clp protease proteolytic subunit, mitochondrial (CLPP).